The sequence spans 491 residues: Glutamate--tRNA ligase (491 aa).

The 'HIGH' region signature appears at 14-24 (PSPTGSPHVGL). Zn(2+)-binding residues include C111, C113, C136, and D138. The short motif at 257–261 (KLSKR) is the 'KMSKS' region element. K260 serves as a coordination point for ATP.

This sequence belongs to the class-I aminoacyl-tRNA synthetase family. Glutamate--tRNA ligase type 1 subfamily. As to quaternary structure, monomer. Zn(2+) is required as a cofactor.

It is found in the cytoplasm. The catalysed reaction is tRNA(Glu) + L-glutamate + ATP = L-glutamyl-tRNA(Glu) + AMP + diphosphate. Its function is as follows. Catalyzes the attachment of glutamate to tRNA(Glu) in a two-step reaction: glutamate is first activated by ATP to form Glu-AMP and then transferred to the acceptor end of tRNA(Glu). The polypeptide is Glutamate--tRNA ligase (Nocardioides sp. (strain ATCC BAA-499 / JS614)).